The chain runs to 85 residues: RNA-binding protein Hfq (85 aa).

Residues 9–68 (DPFLNELRKEKVPVSVFLVNGIKLHGIIDSFDQYVVMLKNSITQMVYKHAISTVVPSRMV) form the Sm domain.

Belongs to the Hfq family. Homohexamer.

Its function is as follows. RNA chaperone that binds small regulatory RNA (sRNAs) and mRNAs to facilitate mRNA translational regulation in response to envelope stress, environmental stress and changes in metabolite concentrations. Also binds with high specificity to tRNAs. The sequence is that of RNA-binding protein Hfq from Legionella pneumophila (strain Paris).